Reading from the N-terminus, the 511-residue chain is Phosphoenolpyruvate carboxylase (511 aa).

It belongs to the PEPCase type 2 family. In terms of assembly, homotetramer. Mg(2+) is required as a cofactor.

The catalysed reaction is oxaloacetate + phosphate = phosphoenolpyruvate + hydrogencarbonate. Functionally, catalyzes the irreversible beta-carboxylation of phosphoenolpyruvate (PEP) to form oxaloacetate (OAA), a four-carbon dicarboxylic acid source for the tricarboxylic acid cycle. The protein is Phosphoenolpyruvate carboxylase of Saccharolobus islandicus (strain M.16.27) (Sulfolobus islandicus).